We begin with the raw amino-acid sequence, 272 residues long: MSGFEQLFAGKLPKLVMFDLDGTLVDSVPDLAVAVDTMLAELGRPIAGLESVRAWVGNGAPVLVRRALANHLDHSGVDDELAEQGLEIFMRAYAQKHEFTVVYPGVRETLKWLQKMGVEMALITNKPERFVAPLLDEMKLGRFFRWIIGGDTMPQKKPDPAALFFVMKMAGVPASQALFVGDSRSDVQAAKAAGVACVALSYGYNHGRPIAEENPAMVIDDLRKLIPGCLDMDAEILLPDINSPSSRESIVVVTRKLWMKVIKALARWRWRA.

Asp-19 (nucleophile) is an active-site residue. Mg(2+) contacts are provided by Asp-19, Asp-21, and Asp-182.

This sequence belongs to the HAD-like hydrolase superfamily. CbbY/CbbZ/Gph/YieH family. Mg(2+) serves as cofactor.

It catalyses the reaction 2-phosphoglycolate + H2O = glycolate + phosphate. The protein operates within organic acid metabolism; glycolate biosynthesis; glycolate from 2-phosphoglycolate: step 1/1. Functionally, specifically catalyzes the dephosphorylation of 2-phosphoglycolate. Is involved in the dissimilation of the intracellular 2-phosphoglycolate formed during the DNA repair of 3'-phosphoglycolate ends, a major class of DNA lesions induced by oxidative stress. This Pseudomonas savastanoi pv. phaseolicola (strain 1448A / Race 6) (Pseudomonas syringae pv. phaseolicola (strain 1448A / Race 6)) protein is Phosphoglycolate phosphatase.